The sequence spans 24 residues: Brevinin-1La (24 aa).

A disulfide bond links Cys-18 and Cys-24.

As to expression, expressed by the skin glands.

It localises to the secreted. Functionally, antibacterial activity against Gram-positive bacterium S.aureus and Gram-negative bacterium E.coli. In Rana luteiventris (Columbia spotted frog), this protein is Brevinin-1La.